A 104-amino-acid polypeptide reads, in one-letter code: Ig kappa chain V region XP-1 (104 aa).

Residues 1 to 24 form a framework-1 region; that stretch reads ADIVMTQTPASVSEPVGGTVTIKC. Positions 25–35 are complementarity-determining-1; it reads QASQSIFBBLA. The interval 36–49 is framework-2; that stretch reads WYQKPGZPPKGLLY. Residues 50-56 form a complementarity-determining-2 region; it reads TBYTLAS. The interval 57–88 is framework-3; it reads GVSSRFSGGGSGTBFTLTISDLECABAATYYC. Positions 89–100 are complementarity-determining-3; the sequence is EXTGVSZBXBKG. Residues 101–104 are framework-4; it reads FGGG.

In Oryctolagus cuniculus (Rabbit), this protein is Ig kappa chain V region XP-1.